An 89-amino-acid polypeptide reads, in one-letter code: UPF0147 protein YN1551_1489 (89 aa).

This sequence belongs to the UPF0147 family.

The polypeptide is UPF0147 protein YN1551_1489 (Saccharolobus islandicus (strain Y.N.15.51 / Yellowstone #2) (Sulfolobus islandicus)).